Consider the following 224-residue polypeptide: Small ribosomal subunit protein uS3 (224 aa).

The KH type-2 domain occupies 39–107 (IREFLKKKPS…DVWVEIAEVK (69 aa)).

Belongs to the universal ribosomal protein uS3 family. In terms of assembly, part of the 30S ribosomal subunit. Forms a tight complex with proteins S10 and S14.

Its function is as follows. Binds the lower part of the 30S subunit head. Binds mRNA in the 70S ribosome, positioning it for translation. This Chlamydia trachomatis serovar D (strain ATCC VR-885 / DSM 19411 / UW-3/Cx) protein is Small ribosomal subunit protein uS3.